We begin with the raw amino-acid sequence, 149 residues long: Small heat shock protein IbpB (149 aa).

The 112-residue stretch at 26–137 (SQEPIDFPPY…QPQRIAIGGG (112 aa)) folds into the sHSP domain.

It belongs to the small heat shock protein (HSP20) family. As to quaternary structure, homodimer. Forms homomultimers of about 100-150 subunits at optimal growth temperatures. Conformation changes to oligomers at high temperatures or high ionic concentrations. The decrease in size of the multimers is accompanied by an increase in chaperone activity.

The protein localises to the cytoplasm. Its function is as follows. Associates with aggregated proteins, together with IbpA, to stabilize and protect them from irreversible denaturation and extensive proteolysis during heat shock and oxidative stress. Aggregated proteins bound to the IbpAB complex are more efficiently refolded and reactivated by the ATP-dependent chaperone systems ClpB and DnaK/DnaJ/GrpE. Its activity is ATP-independent. This Pectobacterium carotovorum subsp. carotovorum (strain PC1) protein is Small heat shock protein IbpB.